Consider the following 249-residue polypeptide: Putative ABC transporter ATP-binding protein GSU1281 (249 aa).

The 231-residue stretch at 6 to 236 folds into the ABC transporter domain; that stretch reads VEVRDLCHCY…DELLATCRLE (231 aa). 39 to 46 contacts ATP; it reads GANGAGKS.

Belongs to the ABC transporter superfamily.

It localises to the cell inner membrane. Probably part of an ABC transporter complex. Responsible for energy coupling to the transport system. The sequence is that of Putative ABC transporter ATP-binding protein GSU1281 from Geobacter sulfurreducens (strain ATCC 51573 / DSM 12127 / PCA).